A 296-amino-acid chain; its full sequence is Sulfate adenylyltransferase subunit 2 (296 aa).

This sequence belongs to the PAPS reductase family. CysD subfamily. Heterodimer composed of CysD, the smaller subunit, and CysN.

It carries out the reaction sulfate + ATP + H(+) = adenosine 5'-phosphosulfate + diphosphate. The protein operates within sulfur metabolism; hydrogen sulfide biosynthesis; sulfite from sulfate: step 1/3. With CysN forms the ATP sulfurylase (ATPS) that catalyzes the adenylation of sulfate producing adenosine 5'-phosphosulfate (APS) and diphosphate, the first enzymatic step in sulfur assimilation pathway. APS synthesis involves the formation of a high-energy phosphoric-sulfuric acid anhydride bond driven by GTP hydrolysis by CysN coupled to ATP hydrolysis by CysD. The polypeptide is Sulfate adenylyltransferase subunit 2 (Rhodospirillum rubrum (strain ATCC 11170 / ATH 1.1.1 / DSM 467 / LMG 4362 / NCIMB 8255 / S1)).